Reading from the N-terminus, the 2072-residue chain is Protein still life, isoform SIF type 1 (2072 aa).

Gly-2 is lipidated: N-myristoyl glycine. One can recognise a WH1 domain in the interval 29-147; it reads RRDGHLLSSF…ECCSPSFKFS (119 aa). 7 disordered regions span residues 153-188, 245-284, 327-355, 459-486, 502-576, 618-655, and 699-747; these read SYSL…EPQC, DNVA…NTNT, EGTQ…RNKD, NNTM…RGYP, EGSP…SPTS, AKSS…ELIR, and SGSS…YKSA. Positions 275 to 284 are enriched in polar residues; that stretch reads VANSGVNTNT. 3 stretches are compositionally biased toward low complexity: residues 338–351, 459–476, and 522–553; these read SVGT…GTGT, NNTM…SGSR, and SSSN…PPQR. A compositionally biased stretch (polar residues) spans 564–576; the sequence is APNVTPTPGSPTS. The segment covering 634–655 has biased composition (basic and acidic residues); that stretch reads IRDKERDRDRDGYYSDRNELIR. The segment covering 732–743 has biased composition (polar residues); it reads SLRQDSSLNDSG. A PH domain is found at 840–958; it reads TGAVRKAGFL…SIHSACAAAF (119 aa). A disordered region spans residues 1088-1119; that stretch reads GRGATKRRPPMLSRSNSGSSRRSMQMNSRDEP. Residues 1100–1114 show a composition bias toward low complexity; that stretch reads SRSNSGSSRRSMQMN. In terms of domain architecture, RBD spans 1121–1188; the sequence is KTFKVAMPDN…PHRNDLIENY (68 aa). The PDZ domain maps to 1204-1293; that stretch reads QVELQRTTLE…LSMMMRSSRT (90 aa). Residues 1403–1424 form a disordered region; sequence AEQETRKSSPTGSVTSSVSTTA. Residues 1410–1424 are compositionally biased toward low complexity; it reads SSPTGSVTSSVSTTA. Positions 1436–1630 constitute a DH domain; it reads KLRKVVMELV…EKVAEHINEM (195 aa). Disordered regions lie at residues 1803-1832, 1844-2039, and 2051-2072; these read MKNF…NSQT, HGSH…YQPV, and PRDM…DVKN. Composition is skewed to low complexity over residues 1811 to 1821 and 1926 to 1943; these read GSVSGHSSQGM and QQQQ…QQGH. Basic and acidic residues predominate over residues 1970-1984; it reads HSSDIERIDPGTKSE. A compositionally biased stretch (low complexity) spans 2007 to 2022; it reads LTLSTTSTLSVGSTGS. Positions 2023–2032 are enriched in polar residues; the sequence is QARLIQSSHP.

In terms of tissue distribution, expressed in both larval and adult brains, mainly in a subset of neurons but not in glia. In the adult eye is expressed in the two primary pigment cells in the subapical region of the eye. Also present in photoreceptors.

It is found in the synapse. In terms of biological role, regulates synaptic differentiation through the organization of actin cytoskeleton possibly by activating Rho-like GTPases. Is likely a factor in the cascade of Rac1 or Cdc42 in the neurons. May play a role in maintaining proper septate junction functions. Required for eye development and most likely affects corneal lens-formation. The protein is Protein still life, isoform SIF type 1 (sif) of Drosophila melanogaster (Fruit fly).